The primary structure comprises 360 residues: NAD(P)H-quinone oxidoreductase subunit 1, chloroplastic (360 aa).

8 consecutive transmembrane segments (helical) span residues 30-50, 98-118, 127-147, 165-185, 203-223, 248-268, 297-317, and 340-360; these read FLPI…LVWL, FSIG…VIPF, FNIG…GLLM, AAQS…ISLL, FWGW…ISSL, YSGI…LISS, IFGT…FLFI, and FLLP…VFSL.

The protein belongs to the complex I subunit 1 family. As to quaternary structure, NDH is composed of at least 16 different subunits, 5 of which are encoded in the nucleus.

It localises to the plastid. The protein resides in the chloroplast thylakoid membrane. The enzyme catalyses a plastoquinone + NADH + (n+1) H(+)(in) = a plastoquinol + NAD(+) + n H(+)(out). The catalysed reaction is a plastoquinone + NADPH + (n+1) H(+)(in) = a plastoquinol + NADP(+) + n H(+)(out). Its function is as follows. NDH shuttles electrons from NAD(P)H:plastoquinone, via FMN and iron-sulfur (Fe-S) centers, to quinones in the photosynthetic chain and possibly in a chloroplast respiratory chain. The immediate electron acceptor for the enzyme in this species is believed to be plastoquinone. Couples the redox reaction to proton translocation, and thus conserves the redox energy in a proton gradient. In Aethionema grandiflorum (Persian stone-cress), this protein is NAD(P)H-quinone oxidoreductase subunit 1, chloroplastic.